Consider the following 76-residue polypeptide: MEKKIIFLVFLVALLALPGFISTEVIKKDTPYKKRKFPYKSECLKACATSFTGGDESRIQEGKPGFFKCTCYFTTG.

The N-terminal stretch at 1 to 23 (MEKKIIFLVFLVALLALPGFIST) is a signal peptide. The important for inhibition of KCNQ4 stretch occupies residues 33–36 (KKRK). Cystine bridges form between Cys-43–Cys-69 and Cys-47–Cys-71.

The protein belongs to the scoloptoxin-15 family. In terms of tissue distribution, expressed by the venom gland.

It is found in the secreted. In terms of biological role, blocks voltage-gated potassium channels Kv7.4/KCNQ4 (IC(50)=2.5 uM), Kv7.1/KCNQ1 (IC(50)=2.8 uM), Kv7.2/KCNQ2 (IC(50)=2.7 uM) and Kv7.5/KCNQ5 (IC(50)=2.7 uM). Targets the pore domain, in particular negatively charged residues 'Asp-266' and 'Asp-288', of KCNQ4 and probably other KCNQ channel family members where these residues are conserved. In vivo, shows vasoconstrictive activity resulting in acute hypertension when injected intravenously in mice. Also induces coronary vasospasms ultimately leading to heart failure. Induces seizures when injected into the hippocampus of mice. Decreases respiratory rate while increasing respiratory amplitude, probably by triggering a contraction of the bronchial ring. This chain is Mu-scoloptoxin(15)-Ssm1a, found in Scolopendra mutilans (Chinese red-headed centipede).